An 86-amino-acid polypeptide reads, in one-letter code: Large ribosomal subunit protein bL27 (86 aa).

Positions 1–24 (MAHKKGTGSTRNGRDSNSKRLGVK) are disordered.

This sequence belongs to the bacterial ribosomal protein bL27 family.

The sequence is that of Large ribosomal subunit protein bL27 from Prochlorococcus marinus (strain MIT 9301).